Reading from the N-terminus, the 109-residue chain is Parvalbumin-7 (109 aa).

N-acetylalanine is present on Ala2. EF-hand domains lie at Leu39 to Asp74 and Leu78 to Glu109. Ca(2+) is bound by residues Asp52, Asp54, Ser56, Phe58, Glu60, Glu63, Asp91, Asp93, Asp95, Lys97, and Glu102.

The protein belongs to the parvalbumin family.

Its function is as follows. In muscle, parvalbumin is thought to be involved in relaxation after contraction. It binds two calcium ions. This chain is Parvalbumin-7 (pvalb7), found in Danio rerio (Zebrafish).